Reading from the N-terminus, the 93-residue chain is UPF0358 protein BH2626 (93 aa).

Belongs to the UPF0358 family.

This is UPF0358 protein BH2626 from Halalkalibacterium halodurans (strain ATCC BAA-125 / DSM 18197 / FERM 7344 / JCM 9153 / C-125) (Bacillus halodurans).